A 1005-amino-acid polypeptide reads, in one-letter code: Helicase-like transcription factor (1005 aa).

Arg27 is modified (omega-N-methylarginine). The DNA-binding element occupies 38 to 287 (EFQDIIPPDD…FSEKDQPENV (250 aa)). Lys112 participates in a covalent cross-link: Glycyl lysine isopeptide (Lys-Gly) (interchain with G-Cter in SUMO2). Residue Tyr195 is modified to Phosphotyrosine; by JAK2. Residue Lys211 forms a Glycyl lysine isopeptide (Lys-Gly) (interchain with G-Cter in SUMO2) linkage. 294 to 301 (DDMGLGKT) lines the ATP pocket. The span at 325–361 (KNQVKKECNSSESDKPGRKDTIKKTDGLSKEGSRYSE) shows a compositional bias: basic and acidic residues. The disordered stretch occupies residues 325 to 385 (KNQVKKECNS…SELSSSQPKR (61 aa)). Polar residues predominate over residues 373 to 382 (YSMSELSSSQ). Phosphoserine occurs at positions 395, 396, and 398. The region spanning 427–603 (GPSKIKEDTA…WSLLSFLKLK (177 aa)) is the Helicase ATP-binding domain. The DEGH box signature appears at 554 to 557 (DEGH). Thr733 is subject to Phosphothreonine. The RING-type zinc finger occupies 757–798 (CAICLDSLTVPVITHCAHVFCKPCICQCIQNEQPHAKCPLCR). Required for interaction with the RFBP isoform of ATP11B stretches follow at residues 767–772 (PVITHC) and 791–796 (HAKCPL). In terms of domain architecture, Helicase C-terminal spans 834-999 (ALMHALIDLR…EMKQAKINEI (166 aa)). The interaction with SP1 and SP3 stretch occupies residues 922 to 1005 (SRVFLMDPAW…INEIRTLIDL (84 aa)).

Belongs to the SNF2/RAD54 helicase family. RAD16 subfamily. Interacts with SP1 and SP3 independently of DNA; the interaction with these transcriptional factors may be required for basal transcription of target genes. Interacts (via the RING-finger) with isoform RFBP of ATP11B. Progesterone-dependent isoform 1 interacts with EGR1; the interaction requires prior binding to DNA and represses c-Rel via a DNA looping mechanism. Interacts with GATA4. Interacts with PCNA; the interaction promotes polyubiquitination of PCNA through association with the UBE2B-RAD18 and UBE2V2-UBE2N ubiquitin ligase complexes. Interacts with RAD18, SHPRH, UBE2V2 and UBE2N. Phosphorylated on serine, threonine, and tyrosine residues. Tyr-195 phosphorylation is catalyzed by JAK2 in response to prolactin treatment. It is required for DNA binding. In terms of tissue distribution, isoform 1 is expressed preferentially in bladder, cervix, diaphragm, duodenum, epididymis, heart, kidney, liver, lung, ovary (granulosa cells), prostate, spleen, testis (predominantly in the Sertoli cells of the seminiferous tubules) and vagina. Isoform 2 is expressed preferentially in lactating mammary gland and uterine endometrium.

It is found in the cytoplasm. Its subcellular location is the nucleus. The protein localises to the nucleolus. The protein resides in the nucleoplasm. The catalysed reaction is S-ubiquitinyl-[E2 ubiquitin-conjugating enzyme]-L-cysteine + [acceptor protein]-L-lysine = [E2 ubiquitin-conjugating enzyme]-L-cysteine + N(6)-ubiquitinyl-[acceptor protein]-L-lysine.. It functions in the pathway protein modification; protein ubiquitination. Its function is as follows. Has both helicase and E3 ubiquitin ligase activities. Possesses intrinsic ATP-dependent nucleosome-remodeling activity. This activity may be required for transcriptional activation or repression of specific target promoters. These may include the SERPINE1, to which this protein can bind directly. Mediates repression by c-Rel through a DNA-looping mechanism. Plays a role in error-free postreplication repair (PRR) of damaged DNA and maintains genomic stability through acting as a ubiquitin ligase for 'Lys-63'-linked polyubiquitination of chromatin-bound PCNA. Transcriptional regulator that mediates the ability of prolactin to augment progesterone-dependent transcription of the SCGB1A1/uteroglobin gene through a bipartite progesterone receptor half-site/overlapping Y-box combination (-38/-26) where progesterone activation is attenuated by nuclear factor Y binding. Regulation also involves two GC-rich sequences in the proximal promoter (positions -162/+90) and a RUSH/SMARCA3 site (positions -616/-611) in the 5'-untranslated region. The protein is Helicase-like transcription factor (HLTF) of Oryctolagus cuniculus (Rabbit).